The sequence spans 198 residues: Ribonuclease HII (198 aa).

Positions 10-198 (QLVAGVDEVG…PVKRALGLAS (189 aa)) constitute an RNase H type-2 domain. Positions 16, 17, and 108 each coordinate a divalent metal cation.

This sequence belongs to the RNase HII family. Mn(2+) serves as cofactor. Mg(2+) is required as a cofactor.

Its subcellular location is the cytoplasm. It carries out the reaction Endonucleolytic cleavage to 5'-phosphomonoester.. Functionally, endonuclease that specifically degrades the RNA of RNA-DNA hybrids. The polypeptide is Ribonuclease HII (Citrobacter koseri (strain ATCC BAA-895 / CDC 4225-83 / SGSC4696)).